The following is a 256-amino-acid chain: Ubiquinone/menaquinone biosynthesis C-methyltransferase UbiE (256 aa).

The span at 1–12 (MTDPRKGDHAEP) shows a compositional bias: basic and acidic residues. A disordered region spans residues 1 to 21 (MTDPRKGDHAEPTTHFGYQDV). Residues Thr-79, Asp-100, and 128 to 129 (DA) each bind S-adenosyl-L-methionine.

Belongs to the class I-like SAM-binding methyltransferase superfamily. MenG/UbiE family.

The catalysed reaction is a 2-demethylmenaquinol + S-adenosyl-L-methionine = a menaquinol + S-adenosyl-L-homocysteine + H(+). It catalyses the reaction a 2-methoxy-6-(all-trans-polyprenyl)benzene-1,4-diol + S-adenosyl-L-methionine = a 5-methoxy-2-methyl-3-(all-trans-polyprenyl)benzene-1,4-diol + S-adenosyl-L-homocysteine + H(+). It participates in quinol/quinone metabolism; menaquinone biosynthesis; menaquinol from 1,4-dihydroxy-2-naphthoate: step 2/2. The protein operates within cofactor biosynthesis; ubiquinone biosynthesis. Its function is as follows. Methyltransferase required for the conversion of demethylmenaquinol (DMKH2) to menaquinol (MKH2) and the conversion of 2-polyprenyl-6-methoxy-1,4-benzoquinol (DDMQH2) to 2-polyprenyl-3-methyl-6-methoxy-1,4-benzoquinol (DMQH2). This chain is Ubiquinone/menaquinone biosynthesis C-methyltransferase UbiE, found in Pseudomonas entomophila (strain L48).